Consider the following 159-residue polypeptide: Ribosomal RNA large subunit methyltransferase H (159 aa).

S-adenosyl-L-methionine-binding residues include L76 and G108.

It belongs to the RNA methyltransferase RlmH family. In terms of assembly, homodimer.

It localises to the cytoplasm. It catalyses the reaction pseudouridine(1915) in 23S rRNA + S-adenosyl-L-methionine = N(3)-methylpseudouridine(1915) in 23S rRNA + S-adenosyl-L-homocysteine + H(+). Its function is as follows. Specifically methylates the pseudouridine at position 1915 (m3Psi1915) in 23S rRNA. The protein is Ribosomal RNA large subunit methyltransferase H of Finegoldia magna (strain ATCC 29328 / DSM 20472 / WAL 2508) (Peptostreptococcus magnus).